The sequence spans 287 residues: N-acetylmannosamine kinase (287 aa).

ATP is bound by residues 5–12 (AIDIGGTK) and 131–138 (GVGGGIII). His155, Cys165, Cys167, and Cys172 together coordinate Zn(2+).

It belongs to the ROK (NagC/XylR) family. NanK subfamily. In terms of assembly, homodimer.

The catalysed reaction is an N-acyl-D-mannosamine + ATP = an N-acyl-D-mannosamine 6-phosphate + ADP + H(+). It participates in amino-sugar metabolism; N-acetylneuraminate degradation; D-fructose 6-phosphate from N-acetylneuraminate: step 2/5. Functionally, catalyzes the phosphorylation of N-acetylmannosamine (ManNAc) to ManNAc-6-P. The protein is N-acetylmannosamine kinase of Vibrio cholerae serotype O1 (strain ATCC 39541 / Classical Ogawa 395 / O395).